The following is an 89-amino-acid chain: Phosphocarrier protein HPr (89 aa).

One can recognise an HPr domain in the interval 1-89 (MERTVTVVPE…DILSTPEAKQ (89 aa)). H14 serves as the catalytic Pros-phosphohistidine intermediate. Position 47 is a phosphoserine; by HPrK/P (S47).

This sequence belongs to the HPr family.

The protein localises to the cytoplasm. Its activity is regulated as follows. Phosphorylation on Ser-47 inhibits the phosphoryl transfer from enzyme I to HPr. General (non sugar-specific) component of the phosphoenolpyruvate-dependent sugar phosphotransferase system (sugar PTS). This major carbohydrate active-transport system catalyzes the phosphorylation of incoming sugar substrates concomitantly with their translocation across the cell membrane. The phosphoryl group from phosphoenolpyruvate (PEP) is transferred to the phosphoryl carrier protein HPr by enzyme I. Phospho-HPr then transfers it to the PTS EIIA domain. Is involved in fructose transport. In Haloferax volcanii (strain ATCC 29605 / DSM 3757 / JCM 8879 / NBRC 14742 / NCIMB 2012 / VKM B-1768 / DS2) (Halobacterium volcanii), this protein is Phosphocarrier protein HPr (ptsH1).